The following is a 380-amino-acid chain: Putative 8-amino-7-oxononanoate synthase (380 aa).

Arg-18 contributes to the substrate binding site. 106–107 (GY) is a binding site for pyridoxal 5'-phosphate. His-131 provides a ligand contact to substrate. Residues Ser-179, 205–208 (DEAH), and 236–239 (TFGK) contribute to the pyridoxal 5'-phosphate site. Lys-239 is subject to N6-(pyridoxal phosphate)lysine. Thr-352 is a binding site for substrate.

This sequence belongs to the class-II pyridoxal-phosphate-dependent aminotransferase family. BioF subfamily. In terms of assembly, homodimer. Pyridoxal 5'-phosphate is required as a cofactor.

It carries out the reaction 6-carboxyhexanoyl-[ACP] + L-alanine + H(+) = (8S)-8-amino-7-oxononanoate + holo-[ACP] + CO2. The protein operates within cofactor biosynthesis; biotin biosynthesis. Its function is as follows. Catalyzes the decarboxylative condensation of pimeloyl-[acyl-carrier protein] and L-alanine to produce 8-amino-7-oxononanoate (AON), [acyl-carrier protein], and carbon dioxide. This is Putative 8-amino-7-oxononanoate synthase (bioF) from Neisseria meningitidis serogroup B (strain ATCC BAA-335 / MC58).